Consider the following 279-residue polypeptide: MEQRYATSPEQVPGMDTAELRRRYLVEDLFAEGEVHAVYTHHDRVVLAGIVPTGDALDLPTFPEIASTTFFEHREAGIVNVGGPGTITVDGETHDLAHGSCLYVGRGADGVSFRSADPAGEAGPARFYLFSAPAHTAHPTTLVEAGGGTVRELGDQLTANRRTLNQYVHENGVKSCQVVMGVTTLHPGSTWNTMPAHTHDRRTEVYLYFGLPAGDRVVHLLGQPAETRHLLVADGQAVVSPSWSIHSGVGTAAYSFVWAMAGENQAFDDMDGVPVAELR.

4 residues coordinate Zn(2+): histidine 197, histidine 199, glutamate 204, and histidine 246.

Belongs to the KduI family. The cofactor is Zn(2+).

The enzyme catalyses 5-dehydro-4-deoxy-D-glucuronate = 3-deoxy-D-glycero-2,5-hexodiulosonate. Its pathway is glycan metabolism; pectin degradation; 2-dehydro-3-deoxy-D-gluconate from pectin: step 4/5. Its function is as follows. Catalyzes the isomerization of 5-dehydro-4-deoxy-D-glucuronate to 3-deoxy-D-glycero-2,5-hexodiulosonate. In Kineococcus radiotolerans (strain ATCC BAA-149 / DSM 14245 / SRS30216), this protein is 4-deoxy-L-threo-5-hexosulose-uronate ketol-isomerase.